Here is a 153-residue protein sequence, read N- to C-terminus: Selenoprotein F (153 aa).

The first 19 residues, 1-19, serve as a signal peptide directing secretion; that stretch reads MAGEVYLLWLLPLLQGLAS. Residue selenocysteine 84 is a non-standard amino acid, selenocysteine.

The protein belongs to the selenoprotein M/F family. Higher levels in polster, prechordal plate, axis, otic vesicle and somites. Lower levels in fin buds.

Its subcellular location is the endoplasmic reticulum lumen. Its function is as follows. May be involved in redox reactions associated with the formation of disulfide bonds. May contribute to the quality control of protein folding in the endoplasmic reticulum. In Danio rerio (Zebrafish), this protein is Selenoprotein F.